The primary structure comprises 304 residues: UDP-N-acetylenolpyruvoylglucosamine reductase (304 aa).

The FAD-binding PCMH-type domain maps to 28–193 (KTGGPADYLA…LTATFALTPG (166 aa)). Arg172 is a catalytic residue. The active-site Proton donor is the Ser222. Glu292 is a catalytic residue.

This sequence belongs to the MurB family. Requires FAD as cofactor.

It localises to the cytoplasm. The catalysed reaction is UDP-N-acetyl-alpha-D-muramate + NADP(+) = UDP-N-acetyl-3-O-(1-carboxyvinyl)-alpha-D-glucosamine + NADPH + H(+). The protein operates within cell wall biogenesis; peptidoglycan biosynthesis. Functionally, cell wall formation. The sequence is that of UDP-N-acetylenolpyruvoylglucosamine reductase from Levilactobacillus brevis (strain ATCC 367 / BCRC 12310 / CIP 105137 / JCM 1170 / LMG 11437 / NCIMB 947 / NCTC 947) (Lactobacillus brevis).